The sequence spans 246 residues: tRNA (guanine-N(7)-)-methyltransferase (246 aa).

S-adenosyl-L-methionine is bound by residues E77, E102, D129, and D152. Residue D152 is part of the active site. Substrate-binding positions include K156, D188, and 225–228 (TKFE).

Belongs to the class I-like SAM-binding methyltransferase superfamily. TrmB family.

The catalysed reaction is guanosine(46) in tRNA + S-adenosyl-L-methionine = N(7)-methylguanosine(46) in tRNA + S-adenosyl-L-homocysteine. The protein operates within tRNA modification; N(7)-methylguanine-tRNA biosynthesis. Catalyzes the formation of N(7)-methylguanine at position 46 (m7G46) in tRNA. This chain is tRNA (guanine-N(7)-)-methyltransferase, found in Haemophilus influenzae (strain ATCC 51907 / DSM 11121 / KW20 / Rd).